A 675-amino-acid polypeptide reads, in one-letter code: Potassium-transporting ATPase ATP-binding subunit 2 (675 aa).

4 consecutive transmembrane segments (helical) span residues 34-54, 65-85, 216-236, and 245-265; these read IMFVVEVGMLLTLILICFPDI, LITIFIILLITILFANFSEAF, IALFTLLTTLTIIFLVVIVTL, and LILPIAMLIALTVCLIPTTIG. Residue aspartate 304 is the 4-aspartylphosphate intermediate of the active site. ATP contacts are provided by residues aspartate 341, glutamate 345, 372-379, and lysine 390; that span reads FTAETRMS. Positions 513 and 517 each coordinate Mg(2+). The next 3 helical transmembrane spans lie at 569 to 591, 611 to 631, and 644 to 664; these read ALTTFSLANDVAKYFAILPALMM, AIISALIFNALIIVALIPIAM, and IFINNMLIYGLGGLIVPFLGI.

This sequence belongs to the cation transport ATPase (P-type) (TC 3.A.3) family. Type IA subfamily. In terms of assembly, the system is composed of three essential subunits: KdpA, KdpB and KdpC.

The protein resides in the cell membrane. It catalyses the reaction K(+)(out) + ATP + H2O = K(+)(in) + ADP + phosphate + H(+). In terms of biological role, part of the high-affinity ATP-driven potassium transport (or Kdp) system, which catalyzes the hydrolysis of ATP coupled with the electrogenic transport of potassium into the cytoplasm. This subunit is responsible for energy coupling to the transport system and for the release of the potassium ions to the cytoplasm. This chain is Potassium-transporting ATPase ATP-binding subunit 2, found in Staphylococcus aureus (strain MRSA252).